The sequence spans 115 residues: NAD(P)H-quinone oxidoreductase subunit M (115 aa).

This sequence belongs to the complex I NdhM subunit family. NDH-1 can be composed of about 15 different subunits; different subcomplexes with different compositions have been identified which probably have different functions.

The protein resides in the cellular thylakoid membrane. The enzyme catalyses a plastoquinone + NADH + (n+1) H(+)(in) = a plastoquinol + NAD(+) + n H(+)(out). The catalysed reaction is a plastoquinone + NADPH + (n+1) H(+)(in) = a plastoquinol + NADP(+) + n H(+)(out). In terms of biological role, NDH-1 shuttles electrons from an unknown electron donor, via FMN and iron-sulfur (Fe-S) centers, to quinones in the respiratory and/or the photosynthetic chain. The immediate electron acceptor for the enzyme in this species is believed to be plastoquinone. Couples the redox reaction to proton translocation, and thus conserves the redox energy in a proton gradient. Cyanobacterial NDH-1 also plays a role in inorganic carbon-concentration. This is NAD(P)H-quinone oxidoreductase subunit M from Prochlorococcus marinus (strain MIT 9312).